The chain runs to 409 residues: Na(+)-translocating NADH-quinone reductase subunit F (409 aa).

A helical transmembrane segment spans residues 5–25; sequence FIFGIIAFTALVLVLAVIILF. A 2Fe-2S ferredoxin-type domain is found at 34 to 128; sequence GDITISINDD…SMDVELPEEI (95 aa). Residues C71, C77, C80, and C112 each contribute to the [2Fe-2S] cluster site. The FAD-binding FR-type domain occupies 131–271; that stretch reads VKKWECTVIS…SGPFGEFFAK (141 aa).

Belongs to the NqrF family. In terms of assembly, composed of six subunits; NqrA, NqrB, NqrC, NqrD, NqrE and NqrF. Requires [2Fe-2S] cluster as cofactor. FAD is required as a cofactor.

It is found in the cell inner membrane. It carries out the reaction a ubiquinone + n Na(+)(in) + NADH + H(+) = a ubiquinol + n Na(+)(out) + NAD(+). Functionally, NQR complex catalyzes the reduction of ubiquinone-1 to ubiquinol by two successive reactions, coupled with the transport of Na(+) ions from the cytoplasm to the periplasm. The first step is catalyzed by NqrF, which accepts electrons from NADH and reduces ubiquinone-1 to ubisemiquinone by a one-electron transfer pathway. This chain is Na(+)-translocating NADH-quinone reductase subunit F, found in Haemophilus ducreyi (strain 35000HP / ATCC 700724).